Consider the following 205-residue polypeptide: N-(5'-phosphoribosyl)anthranilate isomerase (205 aa).

This sequence belongs to the TrpF family.

It catalyses the reaction N-(5-phospho-beta-D-ribosyl)anthranilate = 1-(2-carboxyphenylamino)-1-deoxy-D-ribulose 5-phosphate. Its pathway is amino-acid biosynthesis; L-tryptophan biosynthesis; L-tryptophan from chorismate: step 3/5. In Zygosaccharomyces bailii, this protein is N-(5'-phosphoribosyl)anthranilate isomerase (TRP1).